Consider the following 69-residue polypeptide: MKRQKRDRFQRAYVHGYKAGMTGRSRDDCPSQDINLREYWMSGWREGRGDQWAGMTGISGIHKNPMVLS.

It belongs to the ribosome modulation factor family.

Its subcellular location is the cytoplasm. Its function is as follows. During stationary phase, converts 70S ribosomes to an inactive dimeric form (100S ribosomes). The polypeptide is Ribosome modulation factor (Chromohalobacter salexigens (strain ATCC BAA-138 / DSM 3043 / CIP 106854 / NCIMB 13768 / 1H11)).